The primary structure comprises 517 residues: Serine hydroxymethyltransferase 1, mitochondrial (517 aa).

The transit peptide at 1 to 31 (MAMALALRRLSSSADKPLQRLFNGGHLYSMS) directs the protein to the mitochondrion. K287 carries the N6-(pyridoxal phosphate)lysine modification.

The protein belongs to the SHMT family. As to quaternary structure, homotetramer. Pyridoxal 5'-phosphate is required as a cofactor.

The protein localises to the mitochondrion. The catalysed reaction is (6R)-5,10-methylene-5,6,7,8-tetrahydrofolate + glycine + H2O = (6S)-5,6,7,8-tetrahydrofolate + L-serine. It functions in the pathway one-carbon metabolism; tetrahydrofolate interconversion. Functionally, catalyzes the interconversion of serine and glycine. The protein is Serine hydroxymethyltransferase 1, mitochondrial of Flaveria pringlei.